Here is a 154-residue protein sequence, read N- to C-terminus: Ribosomal RNA large subunit methyltransferase H (154 aa).

Gly102 provides a ligand contact to S-adenosyl-L-methionine.

The protein belongs to the RNA methyltransferase RlmH family. In terms of assembly, homodimer.

The protein localises to the cytoplasm. It catalyses the reaction pseudouridine(1915) in 23S rRNA + S-adenosyl-L-methionine = N(3)-methylpseudouridine(1915) in 23S rRNA + S-adenosyl-L-homocysteine + H(+). In terms of biological role, specifically methylates the pseudouridine at position 1915 (m3Psi1915) in 23S rRNA. In Caulobacter sp. (strain K31), this protein is Ribosomal RNA large subunit methyltransferase H.